Reading from the N-terminus, the 365-residue chain is Mannose-1-phosphate guanylyltransferase catalytic subunit beta (365 aa).

The substrate-binding domain stretch occupies residues 2–221 (KALILVGGYG…PGFWMDVGQP (220 aa)). Position 109 (Asp109) interacts with GDP-alpha-D-mannose. Asp109 lines the Mg(2+) pocket. Lys161 is an active-site residue. A GDP-alpha-D-mannose-binding site is contributed by Asp217. A Mg(2+)-binding site is contributed by Asp217. Residues 244–365 (ETGSNIHPTA…VNVPSKDIIM (122 aa)) are hexapeptide repeat domain.

Belongs to the transferase hexapeptide repeat family. As to quaternary structure, component of the GMPPA-GMPPB mannose-1-phosphate guanylyltransferase complex composed of 4 GMPPA subunits and 8 tag-335/GMPPB subunits; the complex is organized into three layers, a central layer made up of 2 GMPPA dimers sandwiched between two layers each made up of 2 tag-335/GMPPB dimers. Catalytic activity of tag-335/GMPPB is reduced when part of the complex and binding of GDP-alpha-D-Mannose by GMPPA induces allosteric feedback inhibition of tag-335/GMPPB. Mg(2+) is required as a cofactor.

It catalyses the reaction alpha-D-mannose 1-phosphate + GTP + H(+) = GDP-alpha-D-mannose + diphosphate. The protein operates within nucleotide-sugar biosynthesis; GDP-alpha-D-mannose biosynthesis; GDP-alpha-D-mannose from alpha-D-mannose 1-phosphate (GTP route): step 1/1. Enzyme activity is reduced by incorporation into the GMPPA-GMPPB mannose-1-phosphate guanylyltransferase complex. Allosterically inhibited, when part of the GMPPA-GMPPB complex, by GDP-alpha-D-mannose binding to GMPPA. Catalytic subunit of the GMPPA-GMPPB mannose-1-phosphate guanylyltransferase complex. Catalyzes the formation of GDP-mannose, an essential precursor of glycan moieties of glycoproteins and glycolipids. Can catalyze the reverse reaction in vitro. Together with GMPPA regulates GDP-alpha-D-mannose levels. This Caenorhabditis elegans protein is Mannose-1-phosphate guanylyltransferase catalytic subunit beta (tag-335).